The following is a 134-amino-acid chain: uncharacterized protein (134 aa).

Residues 59–92 (VSKPKRRSPHPHGNKAADKRKTTEKEPERKKRVG) are disordered. Residues 61–71 (KPKRRSPHPHG) show a composition bias toward basic residues. Basic and acidic residues predominate over residues 73 to 87 (KAADKRKTTEKEPER).

This is an uncharacterized protein from Saccharomyces cerevisiae (strain ATCC 204508 / S288c) (Baker's yeast).